Here is a 621-residue protein sequence, read N- to C-terminus: Chaperone protein HtpG (621 aa).

The tract at residues 1–341 is a; substrate-binding; that stretch reads MSNQEYTFQT…SEDLPLNVSR (341 aa). Residues 342–547 are b; the sequence is EILQQNKILA…GDEQNAMMAN (206 aa). A c region spans residues 548-621; the sequence is LMRQMGQNMP…RLNSVLLKAL (74 aa).

Belongs to the heat shock protein 90 family. Homodimer.

The protein resides in the cytoplasm. Functionally, molecular chaperone. Has ATPase activity. The polypeptide is Chaperone protein HtpG (Helicobacter acinonychis (strain Sheeba)).